The sequence spans 177 residues: Cytochrome c-type biogenesis protein CcmE (177 aa).

Topologically, residues 1-7 (MTRKSRR) are cytoplasmic. A helical; Signal-anchor for type II membrane protein transmembrane segment spans residues 8–28 (LILIAACGAVLALALGLILSA). Over 29–177 (MSGSIVFFRS…DATLGQRSER (149 aa)) the chain is Periplasmic. 2 residues coordinate heme: His122 and Tyr126. Residues 133–177 (DALKAQGRWQEGGSKEAPKDASKAAPKDAAKPETADATLGQRSER) are disordered. Residues 145–166 (GSKEAPKDASKAAPKDAAKPET) show a composition bias toward basic and acidic residues.

It belongs to the CcmE/CycJ family.

Its subcellular location is the cell inner membrane. Functionally, heme chaperone required for the biogenesis of c-type cytochromes. Transiently binds heme delivered by CcmC and transfers the heme to apo-cytochromes in a process facilitated by CcmF and CcmH. This Methylorubrum extorquens (strain PA1) (Methylobacterium extorquens) protein is Cytochrome c-type biogenesis protein CcmE.